We begin with the raw amino-acid sequence, 272 residues long: Nitrogenase iron protein (272 aa).

ATP is bound at residue 8 to 15 (GKGGIGKS). Cys94 is a binding site for [4Fe-4S] cluster. Arg97 carries the ADP-ribosylarginine; by dinitrogenase reductase ADP-ribosyltransferase modification. A [4Fe-4S] cluster-binding site is contributed by Cys129.

This sequence belongs to the NifH/BchL/ChlL family. As to quaternary structure, homodimer. It depends on [4Fe-4S] cluster as a cofactor. In terms of processing, the reversible ADP-ribosylation of Arg-97 inactivates the nitrogenase reductase and regulates nitrogenase activity.

The enzyme catalyses N2 + 8 reduced [2Fe-2S]-[ferredoxin] + 16 ATP + 16 H2O = H2 + 8 oxidized [2Fe-2S]-[ferredoxin] + 2 NH4(+) + 16 ADP + 16 phosphate + 6 H(+). Functionally, the key enzymatic reactions in nitrogen fixation are catalyzed by the nitrogenase complex, which has 2 components: the iron protein and the molybdenum-iron protein. The chain is Nitrogenase iron protein from Clostridium acetobutylicum (strain ATCC 824 / DSM 792 / JCM 1419 / IAM 19013 / LMG 5710 / NBRC 13948 / NRRL B-527 / VKM B-1787 / 2291 / W).